Consider the following 125-residue polypeptide: uncharacterized protein (125 aa).

A run of 2 helical transmembrane segments spans residues 28-48 (VFIT…SQFC) and 54-74 (FFLP…LFFF).

The protein resides in the membrane. This is an uncharacterized protein from Saccharomyces cerevisiae (strain ATCC 204508 / S288c) (Baker's yeast).